Consider the following 235-residue polypeptide: 7-cyano-7-deazaguanine synthase (235 aa).

8 to 18 (FSGGQDSTTCL) lines the ATP pocket. Cys-187, Cys-196, Cys-199, and Cys-202 together coordinate Zn(2+).

Belongs to the QueC family. It depends on Zn(2+) as a cofactor.

It catalyses the reaction 7-carboxy-7-deazaguanine + NH4(+) + ATP = 7-cyano-7-deazaguanine + ADP + phosphate + H2O + H(+). It functions in the pathway purine metabolism; 7-cyano-7-deazaguanine biosynthesis. Functionally, catalyzes the ATP-dependent conversion of 7-carboxy-7-deazaguanine (CDG) to 7-cyano-7-deazaguanine (preQ(0)). The sequence is that of 7-cyano-7-deazaguanine synthase from Aeromonas hydrophila subsp. hydrophila (strain ATCC 7966 / DSM 30187 / BCRC 13018 / CCUG 14551 / JCM 1027 / KCTC 2358 / NCIMB 9240 / NCTC 8049).